Here is a 415-residue protein sequence, read N- to C-terminus: Esterase FrsA (415 aa).

Residues 1–23 form a disordered region; sequence MANRNLSESLFKPRQKHQETSTL.

This sequence belongs to the FrsA family.

It catalyses the reaction a carboxylic ester + H2O = an alcohol + a carboxylate + H(+). Catalyzes the hydrolysis of esters. This is Esterase FrsA from Photorhabdus laumondii subsp. laumondii (strain DSM 15139 / CIP 105565 / TT01) (Photorhabdus luminescens subsp. laumondii).